The following is a 160-amino-acid chain: Archaemetzincin (160 aa).

His117 is a binding site for Zn(2+). The active-site Proton acceptor is the Glu118. His121, His127, Cys128, Cys132, Cys151, and Cys154 together coordinate Zn(2+).

Belongs to the peptidase M54 family. In terms of assembly, monomer. It depends on Zn(2+) as a cofactor.

In terms of biological role, probable zinc metalloprotease whose natural substrate is unknown. The polypeptide is Archaemetzincin (Archaeoglobus fulgidus (strain ATCC 49558 / DSM 4304 / JCM 9628 / NBRC 100126 / VC-16)).